The sequence spans 413 residues: Elongation factor 1-alpha (413 aa).

One can recognise a tr-type G domain in the interval 5–211 (KTHMNLAFIG…DALDEPDKPV (207 aa)). The segment at 14–21 (GHVDHGKS) is G1. 14–21 (GHVDHGKS) contributes to the GTP binding site. Residue serine 21 participates in Mg(2+) binding. The interval 60–64 (GVTID) is G2. The interval 81 to 84 (DCPG) is G3. GTP-binding positions include 81 to 85 (DCPGH) and 136 to 139 (NKMD). Residues 136–139 (NKMD) form a G4 region. The interval 175 to 177 (SAF) is G5.

This sequence belongs to the TRAFAC class translation factor GTPase superfamily. Classic translation factor GTPase family. EF-Tu/EF-1A subfamily.

The protein resides in the cytoplasm. It carries out the reaction GTP + H2O = GDP + phosphate + H(+). GTP hydrolase that promotes the GTP-dependent binding of aminoacyl-tRNA to the A-site of ribosomes during protein biosynthesis. This is Elongation factor 1-alpha from Methanosphaera stadtmanae (strain ATCC 43021 / DSM 3091 / JCM 11832 / MCB-3).